The sequence spans 136 residues: Large ribosomal subunit protein uL22 (136 aa).

It belongs to the universal ribosomal protein uL22 family. Part of the 50S ribosomal subunit.

Its function is as follows. This protein binds specifically to 23S rRNA; its binding is stimulated by other ribosomal proteins, e.g. L4, L17, and L20. It is important during the early stages of 50S assembly. It makes multiple contacts with different domains of the 23S rRNA in the assembled 50S subunit and ribosome. In terms of biological role, the globular domain of the protein is located near the polypeptide exit tunnel on the outside of the subunit, while an extended beta-hairpin is found that lines the wall of the exit tunnel in the center of the 70S ribosome. The protein is Large ribosomal subunit protein uL22 of Bacteroides fragilis (strain YCH46).